The sequence spans 198 residues: Autophagy-related protein 33 (198 aa).

3 helical membrane passes run 17 to 37 (VSLG…LPAL), 60 to 80 (PVLA…FLAP), and 86 to 106 (PYLL…ILIP). Residues 111-147 (APRRTASSAPRKSSRAKMEASYEVLGDAHSEPASDED) are disordered. The segment covering 112–121 (PRRTASSAPR) has biased composition (low complexity). Residues 126–142 (AKMEASYEVLGDAHSEP) show a composition bias toward basic and acidic residues. The chain crosses the membrane as a helical span at residues 171–191 (TAISALGFAMAVVGIWGDGAP).

Belongs to the ATG33 family.

It is found in the mitochondrion membrane. In terms of biological role, involved in the selective degradation of mitochondria via autophagy during starvation and at post-log phase. Autophagy is required for proper vegetative growth, asexual/sexual reproduction, and full virulence. Autophagy is particularly involved in the biosynthesis of deoxynivalenol (DON), an important virulence determinant. This is Autophagy-related protein 33 from Gibberella zeae (strain ATCC MYA-4620 / CBS 123657 / FGSC 9075 / NRRL 31084 / PH-1) (Wheat head blight fungus).